Consider the following 510-residue polypeptide: Calcium-dependent lipid-binding protein (510 aa).

Residues 1-21 (MGLISGILFGIIFGVALMAGW) form a helical membrane-spanning segment. SMP-LTD domains lie at 66 to 248 (AFEQ…VPIG) and 66 to 250 (AFEQ…IGGI). A phospholipid binding region spans residues 226–488 (DDTVDTIVKD…FMGRTITGQS (263 aa)). 2 consecutive C2 domains span residues 242-362 (RIVV…ELEL) and 246-364 (PIGG…ELNL). 8 residues coordinate Ca(2+): Lys-278, Glu-279, Asp-285, Asp-333, Lys-334, Asp-335, Asp-339, and Glu-340. A coiled-coil region spans residues 390-417 (EFNKEEQMAALEDEKKIMEERKRLKEAG). The 40-residue stretch at 461–500 (MVGSGFGAVGSGLSKAGRFMGRTITGQSSKRSGSSTPVNT) folds into the C2 3 domain. Positions 484–510 (ITGQSSKRSGSSTPVNTVPENDGAKQQ) are disordered.

It belongs to the synaptotagmin family. In terms of assembly, interacts with the biotrophic pathogenic fungi Microbotryum violaceum effector MVLG_01732. Requires Ca(2+) as cofactor. As to expression, mostly expressed in rosette leaves and flowers, to lower extent, in cauline leaves, roots and stems, and, at low levels, in siliques.

It is found in the nucleus membrane. Its function is as follows. May be involved in membrane trafficking. Acts as a repressor of abiotic stress (e.g. drought and salt) responses by binding specifically to the promoter of THAS1 to regulate its transcription. Binds to membrane lipid ceramides. This is Calcium-dependent lipid-binding protein from Arabidopsis thaliana (Mouse-ear cress).